The chain runs to 200 residues: N-(5'-phosphoribosyl)anthranilate isomerase (200 aa).

The protein belongs to the TrpF family.

The enzyme catalyses N-(5-phospho-beta-D-ribosyl)anthranilate = 1-(2-carboxyphenylamino)-1-deoxy-D-ribulose 5-phosphate. It functions in the pathway amino-acid biosynthesis; L-tryptophan biosynthesis; L-tryptophan from chorismate: step 3/5. The polypeptide is N-(5'-phosphoribosyl)anthranilate isomerase (Endomicrobium trichonymphae).